The primary structure comprises 230 residues: RNA-binding protein 24 (230 aa).

An RRM domain is found at 11–88 (TKIFVGGLPY…RKANVNLAYL (78 aa)).

The protein localises to the nucleus. The protein resides in the cytoplasm. Functionally, multifunctional RNA-binding protein involved in the regulation of pre-mRNA splicing, mRNA stability and mRNA translation important for cell fate decision and differentiation. Plays a major role in pre-mRNA alternative splicing regulation. Mediates preferentially muscle-specific exon inclusion in numerous mRNAs important for striated cardiac and skeletal muscle cell differentiation. Binds to intronic splicing enhancer (ISE) composed of stretches of GU-rich motifs localized in flanking intron of exon that will be included by alternative splicing. Involved in embryonic stem cell (ESC) transition to cardiac cell differentiation by promoting pre-mRNA alternative splicing events of several pluripotency and/or differentiation genes. Plays a role in the regulation of mRNA stability and mRNA translation to which it is bound. Involved in myogenic differentiation by regulating myog levels. Binds to a huge amount of mRNAs. Required for embryonic heart development, sarcomer and M-band formation in striated muscles. The protein is RNA-binding protein 24 (rbm24) of Danio rerio (Zebrafish).